A 211-amino-acid chain; its full sequence is ATP phosphoribosyltransferase (211 aa).

It belongs to the ATP phosphoribosyltransferase family. Short subfamily. In terms of assembly, heteromultimer composed of HisG and HisZ subunits.

The protein localises to the cytoplasm. The catalysed reaction is 1-(5-phospho-beta-D-ribosyl)-ATP + diphosphate = 5-phospho-alpha-D-ribose 1-diphosphate + ATP. Its pathway is amino-acid biosynthesis; L-histidine biosynthesis; L-histidine from 5-phospho-alpha-D-ribose 1-diphosphate: step 1/9. Catalyzes the condensation of ATP and 5-phosphoribose 1-diphosphate to form N'-(5'-phosphoribosyl)-ATP (PR-ATP). Has a crucial role in the pathway because the rate of histidine biosynthesis seems to be controlled primarily by regulation of HisG enzymatic activity. This chain is ATP phosphoribosyltransferase, found in Sorangium cellulosum (strain So ce56) (Polyangium cellulosum (strain So ce56)).